Here is a 240-residue protein sequence, read N- to C-terminus: Adenosylcobinamide-GDP ribazoletransferase (240 aa).

Transmembrane regions (helical) follow at residues 31–51, 62–81, 109–129, 133–153, and 179–199; these read LLYY…ASHL, ALLL…DGLA, IAVV…WVLV, IGAQ…GLFL, and VLLV…LLAL.

It belongs to the CobS family. It depends on Mg(2+) as a cofactor.

The protein resides in the cell inner membrane. The enzyme catalyses alpha-ribazole + adenosylcob(III)inamide-GDP = adenosylcob(III)alamin + GMP + H(+). The catalysed reaction is alpha-ribazole 5'-phosphate + adenosylcob(III)inamide-GDP = adenosylcob(III)alamin 5'-phosphate + GMP + H(+). The protein operates within cofactor biosynthesis; adenosylcobalamin biosynthesis; adenosylcobalamin from cob(II)yrinate a,c-diamide: step 7/7. Its function is as follows. Joins adenosylcobinamide-GDP and alpha-ribazole to generate adenosylcobalamin (Ado-cobalamin). Also synthesizes adenosylcobalamin 5'-phosphate from adenosylcobinamide-GDP and alpha-ribazole 5'-phosphate. This is Adenosylcobinamide-GDP ribazoletransferase from Pseudomonas putida (strain ATCC 47054 / DSM 6125 / CFBP 8728 / NCIMB 11950 / KT2440).